A 174-amino-acid polypeptide reads, in one-letter code: uncharacterized protein (174 aa).

Helical transmembrane passes span 8-28 (FLFI…NYVF) and 146-166 (IVSW…IQFI).

The protein localises to the cell membrane. This is an uncharacterized protein from Haemophilus influenzae (strain ATCC 51907 / DSM 11121 / KW20 / Rd).